Consider the following 375-residue polypeptide: Serpin B5 (375 aa).

N-linked (GlcNAc...) asparagine glycans are attached at residues Asn99, Asn133, Asn155, Asn188, and Asn361.

Belongs to the serpin family. Ov-serpin subfamily. As to quaternary structure, interacts with IRF6.

It is found in the secreted. It localises to the extracellular space. In terms of biological role, tumor suppressor. It blocks the growth, invasion, and metastatic properties of mammary tumors. As it does not undergo the S (stressed) to R (relaxed) conformational transition characteristic of active serpins, it exhibits no serine protease inhibitory activity. This is Serpin B5 (SERPINB5) from Plecturocebus moloch (Dusky titi monkey).